A 287-amino-acid chain; its full sequence is Spore wall protein 7 (287 aa).

The N-terminal stretch at 1 to 19 (MIKGLIYLFLFRCLEGRLA) is a signal peptide.

Belongs to the SWP7 family. Interacts with SWP9.

The protein resides in the cytoplasm. The protein localises to the spore wall. It is found in the spore polar tube. Its function is as follows. Involved in adherence of spores to the host cell surface and in infection efficiency. This Nosema bombycis (strain CQ1 / CVCC 102059) (Microsporidian parasite) protein is Spore wall protein 7 (SWP7).